The primary structure comprises 243 residues: MIIIPARLKSSRFENKVLEDIFGLPMVVRCAKNANLVDECVVACDDESIMQTCQKFRIKAVLTSKHHNSGTERCLEAARILGLKNDERVLNLQGDEPFLEKEVILALLEATQNAPFMATCAKVIDEEQAKSPNLVKVVLDSQNNALYFSRSLIPVLRDFDAKRQTPLLGHIGIYGFHNKEILEELCALKPCVLEEIEKLEQLRALYYQKKIAVKIVQSQSVGIDTKEDLQNALKIFSPNLLER.

It belongs to the KdsB family.

It is found in the cytoplasm. The enzyme catalyses 3-deoxy-alpha-D-manno-oct-2-ulosonate + CTP = CMP-3-deoxy-beta-D-manno-octulosonate + diphosphate. The protein operates within nucleotide-sugar biosynthesis; CMP-3-deoxy-D-manno-octulosonate biosynthesis; CMP-3-deoxy-D-manno-octulosonate from 3-deoxy-D-manno-octulosonate and CTP: step 1/1. It functions in the pathway bacterial outer membrane biogenesis; lipopolysaccharide biosynthesis. Functionally, activates KDO (a required 8-carbon sugar) for incorporation into bacterial lipopolysaccharide in Gram-negative bacteria. The sequence is that of 3-deoxy-manno-octulosonate cytidylyltransferase from Helicobacter pylori (strain P12).